A 425-amino-acid polypeptide reads, in one-letter code: Dihydroorotase (425 aa).

Residues histidine 58 and histidine 60 each coordinate Zn(2+). Residues 60 to 62 (HFR) and asparagine 92 contribute to the substrate site. Positions 150, 177, and 230 each coordinate Zn(2+). A substrate-binding site is contributed by asparagine 276. Aspartate 303 is a binding site for Zn(2+). Residue aspartate 303 is part of the active site. Substrate is bound by residues histidine 307 and 321–322 (FG).

The protein belongs to the metallo-dependent hydrolases superfamily. DHOase family. Class I DHOase subfamily. It depends on Zn(2+) as a cofactor.

The enzyme catalyses (S)-dihydroorotate + H2O = N-carbamoyl-L-aspartate + H(+). It participates in pyrimidine metabolism; UMP biosynthesis via de novo pathway; (S)-dihydroorotate from bicarbonate: step 3/3. In terms of biological role, catalyzes the reversible cyclization of carbamoyl aspartate to dihydroorotate. This chain is Dihydroorotase, found in Pediococcus pentosaceus (strain ATCC 25745 / CCUG 21536 / LMG 10740 / 183-1w).